We begin with the raw amino-acid sequence, 128 residues long: 14 kDa zinc-binding protein (128 aa).

One can recognise an HIT domain in the interval 18 to 128 (IFDKIIKKEI…GGRQMNWPPG (111 aa)). A Histidine triad motif motif is present at residues 112–116 (HIHVH).

As to quaternary structure, homodimer.

The protein is 14 kDa zinc-binding protein (ZBP14) of Zea mays (Maize).